Consider the following 477-residue polypeptide: Actin-related protein 7 (477 aa).

The protein belongs to the actin family. Forms a heterodimer with ARP9. Interacts with NPL6. Component of the two forms of the RSC complex composed of at least either RSC1 or RSC2, and ARP7, ARP9, LDB7, NPL6, RSC3, RSC30, RSC4, RSC58, RSC6, RSC8, RSC9, SFH1, STH1, HTL1 and probably RTT102. The complexes interact with histone and histone variant components of centromeric chromatin. Component of the SWI/SNF global transcription activator complex. The 1.14 MDa SWI/SNF complex is composed of 11 different subunits: one copy each of SWI1, SNF2/SWI2, SNF5, SNF12/SWP73, ARP7/SWP61, ARP9/SWP59; two copies each of SWI3, SNF6, SNF11, SWP82; and three copies of TAF14/SWP29.

The protein resides in the nucleus. Component of the chromatin structure remodeling complex (RSC), which is involved in transcription regulation and nucleosome positioning. RSC is responsible for the transfer of a histone octamer from a nucleosome core particle to naked DNA. The reaction requires ATP and involves an activated RSC-nucleosome intermediate. Remodeling reaction also involves DNA translocation, DNA twist and conformational change. As a reconfigurer of centromeric and flanking nucleosomes, RSC complex is required both for proper kinetochore function in chromosome segregation and, via a PKC1-dependent signaling pathway, for organization of the cellular cytoskeleton. This subunit is involved in transcriptional regulation. Heterodimer of ARP7 and ARP9 functions with HMG box proteins to facilitate proper chromatin architecture. Heterodimer formation is necessary for assembly into RSC complex. Part of the SWI/SNF complex, an ATP-dependent chromatin remodeling complex, is required for the positive and negative regulation of gene expression of a large number of genes. It changes chromatin structure by altering DNA-histone contacts within a nucleosome, leading eventually to a change in nucleosome position, thus facilitating or repressing binding of gene-specific transcription factors. The sequence is that of Actin-related protein 7 (ARP7) from Saccharomyces cerevisiae (strain ATCC 204508 / S288c) (Baker's yeast).